A 686-amino-acid polypeptide reads, in one-letter code: Translation initiation factor IF-2 (686 aa).

The segment at 61-98 (FEVEEKVVRSKKNSNKKKKKGKGNEDKRQENFAGRQQT) is disordered. Positions 69–81 (RSKKNSNKKKKKG) are enriched in basic residues. Positions 188–357 (ERPAVVTIMG…LLVSEVEEYK (170 aa)) constitute a tr-type G domain. The G1 stretch occupies residues 197 to 204 (GHVDHGKT). 197-204 (GHVDHGKT) serves as a coordination point for GTP. The tract at residues 222–226 (GITQH) is G2. The segment at 243 to 246 (DTPG) is G3. GTP contacts are provided by residues 243–247 (DTPGH) and 297–300 (NKMD). The interval 297-300 (NKMD) is G4. A G5 region spans residues 333-335 (SAI).

The protein belongs to the TRAFAC class translation factor GTPase superfamily. Classic translation factor GTPase family. IF-2 subfamily.

It is found in the cytoplasm. One of the essential components for the initiation of protein synthesis. Protects formylmethionyl-tRNA from spontaneous hydrolysis and promotes its binding to the 30S ribosomal subunits. Also involved in the hydrolysis of GTP during the formation of the 70S ribosomal complex. In Bacillus cereus (strain B4264), this protein is Translation initiation factor IF-2.